The sequence spans 494 residues: Ammonium transporter Rh type C (494 aa).

Residues 1-22 (MGNFIQGCKDYFSQQKNTNIRL) lie on the Cytoplasmic side of the membrane. The chain crosses the membrane as a helical span at residues 23 to 43 (TLPVVCFVWQIAMIILFGVFI). Residues 44–74 (RYDEESDTHWVETKAHDNITSDIENDFYFRY) are Extracellular-facing. N-linked (GlcNAc...) asparagine glycosylation is present at asparagine 61. Residues 75–95 (PSFQDVHVMIFVGFGFLMTFL) form a helical membrane-spanning segment. At 96 to 99 (KRYS) the chain is on the cytoplasmic side. The helical transmembrane segment at 100 to 120 (FGAVGFNFLIASFGLQWALLM) threads the bilayer. The Extracellular portion of the chain corresponds to 121–133 (QGWFHSLDPQTGK). A helical membrane pass occupies residues 134 to 154 (IFIGVESLINADFCVAGCLIA). At 155-166 (YGAVLGKVSPVQ) the chain is on the cytoplasmic side. Residues 167–187 (LLVMTLFGVTLFAVEEYIILN) traverse the membrane as a helical segment. Over 188–194 (LLHARDA) the chain is Extracellular. A helical membrane pass occupies residues 195–215 (GGSMVIHTFGGYYGLTISWVL). At 216–234 (YRPNLHQSKRMQGSVYHSD) the chain is on the cytoplasmic side. A helical transmembrane segment spans residues 235 to 255 (IFAMIGTLFLWMFWPSFNSAI). The Extracellular segment spans residues 256-265 (TDHGDGQHRA). The chain crosses the membrane as a helical span at residues 266–286 (VINTYLCLASTVLTTVAISSF). Residues 287 to 297 (SQKTGKLDMVH) lie on the Cytoplasmic side of the membrane. Residues 298–318 (IQNSTLAGGVALGTAAEFMIS) form a helical membrane-spanning segment. A topological domain (extracellular) is located at residue proline 319. Residues 320–340 (YGALIVGFLCGIISTMGYIFI) traverse the membrane as a helical segment. Over 341–358 (SPFLEKTLKIQDTCGIHN) the chain is Cytoplasmic. A helical transmembrane segment spans residues 359–379 (LHAMPGVIGGIVGAITAAAAS). Over 380–411 (ESVYGKHALINTFDFTGDFKDRTVLTQGGYQA) the chain is Extracellular. Residues 412–432 (AGMCVSIVFGVAGGAIVGSIL) traverse the membrane as a helical segment. The Cytoplasmic portion of the chain corresponds to 433 to 494 (KLPIWGDPAD…SNFSVEHCES (62 aa)).

The protein belongs to the ammonium transporter (TC 2.A.49) family. Rh subfamily. As to quaternary structure, homotrimer.

The protein resides in the apical cell membrane. Functionally, functions as an ammonia transporter. May play a role in the elimination of ammonia in the gill. In Oncorhynchus mykiss (Rainbow trout), this protein is Ammonium transporter Rh type C (rhcg).